The primary structure comprises 132 residues: Aspartate 1-decarboxylase (132 aa).

The Schiff-base intermediate with substrate; via pyruvic acid role is filled by Ser-25. A Pyruvic acid (Ser) modification is found at Ser-25. Thr-57 is a binding site for substrate. Residue Tyr-58 is the Proton donor of the active site. 73–75 (GAA) contacts substrate.

The protein belongs to the PanD family. As to quaternary structure, heterooctamer of four alpha and four beta subunits. Pyruvate serves as cofactor. Is synthesized initially as an inactive proenzyme, which is activated by self-cleavage at a specific serine bond to produce a beta-subunit with a hydroxyl group at its C-terminus and an alpha-subunit with a pyruvoyl group at its N-terminus.

The protein resides in the cytoplasm. The enzyme catalyses L-aspartate + H(+) = beta-alanine + CO2. It participates in cofactor biosynthesis; (R)-pantothenate biosynthesis; beta-alanine from L-aspartate: step 1/1. Its function is as follows. Catalyzes the pyruvoyl-dependent decarboxylation of aspartate to produce beta-alanine. In Heliobacterium modesticaldum (strain ATCC 51547 / Ice1), this protein is Aspartate 1-decarboxylase.